We begin with the raw amino-acid sequence, 167 residues long: uncharacterized protein (167 aa).

This is an uncharacterized protein from Acidianus convivator (ATV).